Here is a 1512-residue protein sequence, read N- to C-terminus: Bifunctional glutamate/proline--tRNA ligase (1512 aa).

The interval 164–759 (GTKWDVSGNR…SSVLYSRVAV (596 aa)) is glutamate--tRNA ligase. Positions 204–214 (PEASGYLHIGH) match the 'HIGH' region motif. Positions 294–315 (TPAEQMKAEREQRTESKHRKNS) are disordered. Residues 299–308 (MKAEREQRTE) show a composition bias toward basic and acidic residues. K300 is subject to N6-acetyllysine; alternate. N6-malonyllysine; alternate is present on K300. T355 is modified (phosphothreonine). K417 carries the post-translational modification N6-acetyllysine. A 'KMSKS' region motif is present at residues 432–436 (VLSKR). S434 carries the post-translational modification Phosphoserine. N6-acetyllysine occurs at positions 498, 535, 542, and 637. Basic and acidic residues predominate over residues 709–736 (EMPTSGSKEKTKVEISKKETSSAPKERP). Residues 709 to 742 (EMPTSGSKEKTKVEISKKETSSAPKERPAPAVSS) are disordered. One can recognise a WHEP-TRS 1 domain in the interval 749–805 (DSSVLYSRVAVQGDVVRELKAKKAPKEDIDAAVKQLLTLKAEYKEKTGQEYKPGNPS). The segment at 760 to 956 (QGDVVRELKA…GIEYKPVSAT (197 aa)) is 3 X 57 AA approximate repeats. K788 carries the N6-acetyllysine modification. Residues 795–819 (TGQEYKPGNPSAAAVQTVSTKSSSN) are disordered. Polar residues predominate over residues 808–819 (AVQTVSTKSSSN). One can recognise a WHEP-TRS 2 domain in the interval 822–878 (ESTSLYNKVAAQGEVVRKLKAEKAPKAKVTEAVECLLSLKAEYKEKTGKDYVPGQPP). K861 bears the N6-acetyllysine mark. Disordered regions lie at residues 869-898 (GKDY…GAEK) and 956-1011 (TGAE…PKKQ). At Y872 the chain carries Phosphotyrosine. The segment covering 878–892 (PASQNSHSNPVSNAQ) has biased composition (polar residues). S885 is subject to Phosphoserine. One can recognise a WHEP-TRS 3 domain in the interval 900-956 (EAKVLFDRVACQGEVVRKLKAEKASKDQVDSAVQELLQLKAQYKSLTGIEYKPVSAT). Residues 958 to 976 (AEDKDKKKKEKENKSEKQN) are compositionally biased toward basic and acidic residues. Residues 997–1006 (LSSGGAGEGQ) are compositionally biased toward gly residues. Residue S998 is modified to Phosphoserine. Residue S999 is modified to Phosphoserine; by RPS6KB1. Residues 1007-1512 (GPKKQTRLGL…KFYTLFGRSY (506 aa)) form a proline--tRNA ligase region. L-proline is bound by residues 1121 to 1123 (TSE) and R1152. Positions 1152, 1154, 1163, 1164, 1237, and 1240 each coordinate ATP. R1152 carries the post-translational modification Omega-N-methylarginine. Q1237 is a binding site for Mg(2+). H1242 serves as a coordination point for L-proline. The ATP site is built by T1276 and R1278. S1350 carries the post-translational modification Phosphoserine. The Zn(2+) site is built by C1448, C1453, C1495, and C1497. An N6-acetyllysine modification is found at K1503.

It in the N-terminal section; belongs to the class-I aminoacyl-tRNA synthetase family. Glutamate--tRNA ligase type 2 subfamily. In the C-terminal section; belongs to the class-II aminoacyl-tRNA synthetase family. As to quaternary structure, homodimer. Part of the aminoacyl-tRNA synthetase multienzyme complex, also know as multisynthetase complex, that is composed of the tRNA ligases for Arg (RARS1), Asp (DARS1), Gln (QARS1), Ile (IARS1), Leu (LARS1), Lys (KARS1), Met (MARS1) the bifunctional ligase for Glu and Pro (EPRS1) and the auxiliary subunits AIMP1/p43, AIMP2/p38 and EEF1E1/p18. Forms a linear complex that contains MARS1, EEF1E1, EPRS1 and AIMP2 that is at the core of the multisubunit complex. Interacts with TARS3. Interacts with DUS2L. Component of the GAIT complex which is composed of EPRS1, RPL13A and GAPDH. Interacts (phosphorylated at Ser-999) with SLC27A1; mediates the translocation of SLC27A1 from the cytoplasm to the plasma membrane thereby increasing the uptake of long-chain fatty acids. Phosphorylated at Ser-999 by RPS6KB1; triggers EPRS1 release from the aminoacyl-tRNA synthetase multienzyme complex. In monocytes, the IFN-gamma-induced phosphorylation at Ser-999 releases EPRS1 from the aminoacyl-tRNA synthetase multienzyme complex, allowing its association with the GAIT complex. Phosphorylation at Ser-999 is specifically required for the RPL13A-mediated interaction of the GAIT complex with eIF4G. Phosphorylation at Ser-999 by RPS6KB1, is also induced by insulin through activation of the mTORC1 signaling pathway and promotes the interaction of EPRS1 with SLC27A1.

It localises to the cytoplasm. The protein resides in the cytosol. Its subcellular location is the membrane. It catalyses the reaction tRNA(Glu) + L-glutamate + ATP = L-glutamyl-tRNA(Glu) + AMP + diphosphate. The catalysed reaction is tRNA(Pro) + L-proline + ATP = L-prolyl-tRNA(Pro) + AMP + diphosphate. Functionally, multifunctional protein which primarily functions within the aminoacyl-tRNA synthetase multienzyme complex, also known as multisynthetase complex. Within the complex it catalyzes the attachment of both L-glutamate and L-proline to their cognate tRNAs in a two-step reaction where the amino acid is first activated by ATP to form a covalent intermediate with AMP. Subsequently, the activated amino acid is transferred to the acceptor end of the cognate tRNA to form L-glutamyl-tRNA(Glu) and L-prolyl-tRNA(Pro). Upon interferon-gamma stimulation, EPRS1 undergoes phosphorylation, causing its dissociation from the aminoacyl-tRNA synthetase multienzyme complex. It is recruited to form the GAIT complex, which binds to stem loop-containing GAIT elements found in the 3'-UTR of various inflammatory mRNAs, such as ceruloplasmin. The GAIT complex inhibits the translation of these mRNAs, allowing interferon-gamma to redirect the function of EPRS1 from protein synthesis to translation inhibition in specific cell contexts. Furthermore, it can function as a downstream effector in the mTORC1 signaling pathway, by promoting the translocation of SLC27A1 from the cytoplasm to the plasma membrane where it mediates the uptake of long-chain fatty acid by adipocytes. Thereby, EPRS1 also plays a role in fat metabolism and more indirectly influences lifespan. This chain is Bifunctional glutamate/proline--tRNA ligase, found in Mus musculus (Mouse).